The primary structure comprises 184 residues: Threonylcarbamoyl-AMP synthase (184 aa).

In terms of domain architecture, YrdC-like spans 1–184; that stretch reads MNNLLAVIEL…IFTQHIFRQG (184 aa).

Belongs to the SUA5 family. TsaC subfamily.

The protein resides in the cytoplasm. It carries out the reaction L-threonine + hydrogencarbonate + ATP = L-threonylcarbamoyladenylate + diphosphate + H2O. Functionally, required for the formation of a threonylcarbamoyl group on adenosine at position 37 (t(6)A37) in tRNAs that read codons beginning with adenine. Catalyzes the conversion of L-threonine, HCO(3)(-)/CO(2) and ATP to give threonylcarbamoyl-AMP (TC-AMP) as the acyladenylate intermediate, with the release of diphosphate. In Haemophilus ducreyi (strain 35000HP / ATCC 700724), this protein is Threonylcarbamoyl-AMP synthase.